The following is a 159-amino-acid chain: Nucleotide-binding protein PSPA7_4966 (159 aa).

It belongs to the YajQ family.

Its function is as follows. Nucleotide-binding protein. The sequence is that of Nucleotide-binding protein PSPA7_4966 from Pseudomonas paraeruginosa (strain DSM 24068 / PA7) (Pseudomonas aeruginosa (strain PA7)).